Here is a 77-residue protein sequence, read N- to C-terminus: Acyl carrier protein (77 aa).

The 76-residue stretch at 1-76 (MAVFDDVRDV…DVVNYIEKLG (76 aa)) folds into the Carrier domain. Position 36 is an O-(pantetheine 4'-phosphoryl)serine (S36).

This sequence belongs to the acyl carrier protein (ACP) family. In terms of processing, 4'-phosphopantetheine is transferred from CoA to a specific serine of apo-ACP by AcpS. This modification is essential for activity because fatty acids are bound in thioester linkage to the sulfhydryl of the prosthetic group.

It localises to the cytoplasm. It participates in lipid metabolism; fatty acid biosynthesis. Carrier of the growing fatty acid chain in fatty acid biosynthesis. In Campylobacter curvus (strain 525.92), this protein is Acyl carrier protein.